We begin with the raw amino-acid sequence, 263 residues long: HTH-type transcriptional repressor NanR (263 aa).

An HTH gntR-type domain is found at 30 to 98 (KKLSEMVEEE…NGERARVSRP (69 aa)). Residues 58 to 77 (ERELMAFFNVGRPSVREALA) constitute a DNA-binding region (H-T-H motif).

The protein belongs to the NanR family.

Transcriptional repressor that controls expression of the genes required for the catabolism of sialic acids. The polypeptide is HTH-type transcriptional repressor NanR (Salmonella bongori (strain ATCC 43975 / DSM 13772 / NCTC 12419)).